The sequence spans 55 residues: Ovomucoid (55 aa).

Residues 5–55 (VDCSEHPKPACTLDYRPICGSDSKTYSNKCDFCNAVMDSNGTLTLSHFGKC) enclose the Kazal-like domain. Intrachain disulfides connect Cys7–Cys37, Cys15–Cys34, and Cys23–Cys55. An N-linked (GlcNAc...) asparagine glycan is attached at Asn44.

It localises to the secreted. The sequence is that of Ovomucoid from Dacelo novaeguineae (Laughing kookaburra).